The following is a 191-amino-acid chain: CASP-like protein 4C3 (191 aa).

The Cytoplasmic portion of the chain corresponds to 1-29 (METGDSAVKSSQDVHYYGKSTAQKHRRSN). A helical membrane pass occupies residues 30-50 (GIILIFRALTFSFSLTSVIVM). The Extracellular portion of the chain corresponds to 51–72 (GTNRHRIDAQSRVAWYDFDPFR). The chain crosses the membrane as a helical span at residues 73 to 93 (YVLAVNAIICIYSFVEIWLAV). At 94 to 116 (YTYLKDTLFLPETFQVWFDYGHD) the chain is on the cytoplasmic side. A helical transmembrane segment spans residues 117–137 (QGFAYLLFSANSAGIAMAQLL). At 138 to 162 (QSGNSLIHGAYRCSDAGVFCTQARA) the chain is on the extracellular side. The chain crosses the membrane as a helical span at residues 163–183 (SIGLGFGAFLFLALSSLLTGL). Over 184-191 (RVARWYFS) the chain is Cytoplasmic.

It belongs to the Casparian strip membrane proteins (CASP) family. In terms of assembly, homodimer and heterodimers.

It localises to the cell membrane. This Physcomitrium patens (Spreading-leaved earth moss) protein is CASP-like protein 4C3.